The sequence spans 220 residues: Pyridoxine/pyridoxamine 5'-phosphate oxidase (220 aa).

Residues 13–16 (RVEY) and Lys-77 each bind substrate. FMN-binding positions include 72–77 (RTVLCK), 87–88 (FT), Lys-94, and Gln-116. Positions 134, 138, and 142 each coordinate substrate. FMN-binding positions include 151–152 (QS) and Trp-197. 203-205 (RVH) lines the substrate pocket. Arg-207 contributes to the FMN binding site.

The protein belongs to the pyridoxamine 5'-phosphate oxidase family. Homodimer. FMN is required as a cofactor.

The enzyme catalyses pyridoxamine 5'-phosphate + O2 + H2O = pyridoxal 5'-phosphate + H2O2 + NH4(+). The catalysed reaction is pyridoxine 5'-phosphate + O2 = pyridoxal 5'-phosphate + H2O2. It functions in the pathway cofactor metabolism; pyridoxal 5'-phosphate salvage; pyridoxal 5'-phosphate from pyridoxamine 5'-phosphate: step 1/1. It participates in cofactor metabolism; pyridoxal 5'-phosphate salvage; pyridoxal 5'-phosphate from pyridoxine 5'-phosphate: step 1/1. Functionally, catalyzes the oxidation of either pyridoxine 5'-phosphate (PNP) or pyridoxamine 5'-phosphate (PMP) into pyridoxal 5'-phosphate (PLP). In Mycobacterium sp. (strain KMS), this protein is Pyridoxine/pyridoxamine 5'-phosphate oxidase.